The primary structure comprises 257 residues: 8-demethyl-8-aminoriboflavin-5'-phosphate synthase (257 aa).

FMN is bound by residues 11-13 (TLR), 19-21 (SQT), 91-94 (ITLN), 132-136 (CGNED), and Tyr240.

It belongs to the SsuE family. In terms of assembly, homotetramer.

The enzyme catalyses FMN + L-glutamate + 3 A + O2 + H2O = 8-amino-8-demethylriboflavin 5'-phosphate + 2-oxoglutarate + 3 AH2 + CO2 + H(+). Its pathway is antibiotic biosynthesis. Involved in the biosynthesis of the riboflavin analog antibiotic roseoflavin (3,8-dimethylamino-riboflavin). Catalyzes the site-specific substitution of the C-8 methyl group of riboflavin-5'-phosphate (FMN) by an amino group to yield 8-amino-8-demethylriboflavin 5'-phosphate, via a combined oxidation, decarboxylation and transamination reaction. The catalysis is initiated by an oxidation step in which the C-8 methyl group on the dimethylbenzene ring of FMN is converted to a formyl group to yield the 8-demethyl-8-formylriboflavin-5'-phosphate (OHC-RP) intermediate. In the presence of thiamine, the formyl group is oxidized into a carboxyl group to yield the 8-demethyl-8-carboxyriboflavin-5'-phosphate (HO2C-RP) intermediate. Finally, in the presence of L-glutamate as an amino donor, decarboxylation and aminotransfer occur, resulting in production of 8-demethyl-8-aminoriboflavin-5'-phosphate. Addition of NAD (but not NADP) to the reaction increases the yield 1.7-fold. The reaction also proceeds without the addition of any electron acceptor, and it is possible that molecular oxygen serves this role. In Streptomyces davaonensis (strain DSM 101723 / JCM 4913 / KCC S-0913 / 768), this protein is 8-demethyl-8-aminoriboflavin-5'-phosphate synthase.